Consider the following 214-residue polypeptide: Probable GTP-binding protein EngB (214 aa).

Residues 22–194 form the EngB-type G domain; the sequence is HLPEIAFAGR…WARIDALLEP (173 aa). GTP is bound by residues 30-37, 57-61, 75-78, 142-145, and 173-175; these read GRSNVGKS, GRTQL, DLPG, TKCD, and FSA. Residues serine 37 and threonine 59 each contribute to the Mg(2+) site. Positions 195–214 are disordered; it reads TAAETPGIPEEPAPPGPVND. The segment covering 203-214 has biased composition (pro residues); that stretch reads PEEPAPPGPVND.

Belongs to the TRAFAC class TrmE-Era-EngA-EngB-Septin-like GTPase superfamily. EngB GTPase family. Mg(2+) serves as cofactor.

Necessary for normal cell division and for the maintenance of normal septation. This is Probable GTP-binding protein EngB from Geobacter sp. (strain M21).